Consider the following 294-residue polypeptide: MARYVGRFAPSPSGPLHFGSLIAALGSYFQAKANNGIWLVRIEDLDPPREMPGASQLILEALKAYQLHWDGEVVYQSERHGLYQAQIDAWLDNGDAYYCQCTRKQIKEHGGFYPGTCRDKNLKEGAIRLKMTKPVARFLDQKHGMIEIPEQLVNEDFIIKRRDGLFAYNLAVVLDDIDQGVTEVVRGADLIEPTGRQISLYQILGQPEVSYLHLPLAMDDNGNKLSKQNHATAIDIENPKPALLHAMTFLGFDVPEEIKAASMNEILSWGCENWRLEQLPSEIEITPRFSNGTV.

L-glutamate-binding positions include 7–11 (RFAPS) and Glu43. The 'HIGH' region signature appears at 10-20 (PSPSGPLHFGS). Zn(2+)-binding residues include Cys99, Cys101, Tyr113, and Cys117. L-glutamate contacts are provided by Tyr168 and Arg186. Positions 224 to 228 (KLSKQ) match the 'KMSKS' region motif. Lys227 lines the ATP pocket.

It belongs to the class-I aminoacyl-tRNA synthetase family. GluQ subfamily. Zn(2+) is required as a cofactor.

Its function is as follows. Catalyzes the tRNA-independent activation of glutamate in presence of ATP and the subsequent transfer of glutamate onto a tRNA(Asp). Glutamate is transferred on the 2-amino-5-(4,5-dihydroxy-2-cyclopenten-1-yl) moiety of the queuosine in the wobble position of the QUC anticodon. In Vibrio parahaemolyticus serotype O3:K6 (strain RIMD 2210633), this protein is Glutamyl-Q tRNA(Asp) synthetase.